Reading from the N-terminus, the 420-residue chain is MIDLRLLREDPDAVRASQRARGEDPALVDALLEADAARRAAVATADNLRAEQKAMSKQIGKAPKEERSALLARAQELSVKVKEAEAAQHAADADLDAAHRALSNVVLPAVPAGGEDDYVVLETVGTPPEFDFEPKDHLELGEALGLMDMERGAKVSGSRFYFLTGHGALLQLGLLQLAAQKAVANGFTMMIPPVLVRPEVMAGTGFLGRHAAEVYHLADDDMYLVGTSEVPLAGYHADEILDLSAGPKRYAGWSSCFRREAGSYGKDTRGIIRVHQFDKVEMFVYTTPDQAEAEHERLLAWEREMLAAIEVPYRIIDVAAGDLGSSAARKFDCEAWVPSQQTYRELTSTSNCTTFQARRLSVRYRDENGKPQIAATLNGTLATTRWIVAILENHQRADGSVRVPAALVPFVGTDVLRPPA.

Residue 227–229 (TSE) participates in L-serine binding. ATP is bound by residues 258 to 260 (RRE) and V274. E281 contributes to the L-serine binding site. An ATP-binding site is contributed by 345–348 (ELTS). T380 serves as a coordination point for L-serine.

This sequence belongs to the class-II aminoacyl-tRNA synthetase family. Type-1 seryl-tRNA synthetase subfamily. As to quaternary structure, homodimer. The tRNA molecule binds across the dimer.

It localises to the cytoplasm. The catalysed reaction is tRNA(Ser) + L-serine + ATP = L-seryl-tRNA(Ser) + AMP + diphosphate + H(+). The enzyme catalyses tRNA(Sec) + L-serine + ATP = L-seryl-tRNA(Sec) + AMP + diphosphate + H(+). Its pathway is aminoacyl-tRNA biosynthesis; selenocysteinyl-tRNA(Sec) biosynthesis; L-seryl-tRNA(Sec) from L-serine and tRNA(Sec): step 1/1. Catalyzes the attachment of serine to tRNA(Ser). Is also able to aminoacylate tRNA(Sec) with serine, to form the misacylated tRNA L-seryl-tRNA(Sec), which will be further converted into selenocysteinyl-tRNA(Sec). In Nocardia farcinica (strain IFM 10152), this protein is Serine--tRNA ligase.